The primary structure comprises 340 residues: Adenosine kinase (340 aa).

Residue Asp293 is part of the active site.

The protein belongs to the carbohydrate kinase PfkB family. Mg(2+) is required as a cofactor.

The catalysed reaction is adenosine + ATP = AMP + ADP + H(+). Its pathway is purine metabolism; AMP biosynthesis via salvage pathway; AMP from adenosine: step 1/1. Its function is as follows. ATP dependent phosphorylation of adenosine and other related nucleoside analogs to monophosphate derivatives. ADO1 does not play a major role in adenine utilization in yeast. Its physiological role could primarily be to recycle adenosine produced by the methyl cycle. This chain is Adenosine kinase, found in Saccharomyces cerevisiae (strain ATCC 204508 / S288c) (Baker's yeast).